The primary structure comprises 219 residues: Ribosomal RNA small subunit methyltransferase G (219 aa).

S-adenosyl-L-methionine-binding positions include Gly78, Phe83, Gly129–Glu130, and Arg146.

This sequence belongs to the methyltransferase superfamily. RNA methyltransferase RsmG family.

The protein resides in the cytoplasm. The enzyme catalyses guanosine(527) in 16S rRNA + S-adenosyl-L-methionine = N(7)-methylguanosine(527) in 16S rRNA + S-adenosyl-L-homocysteine. Functionally, specifically methylates the N7 position of guanine in position 527 of 16S rRNA. The protein is Ribosomal RNA small subunit methyltransferase G of Geotalea uraniireducens (strain Rf4) (Geobacter uraniireducens).